We begin with the raw amino-acid sequence, 711 residues long: Ribosomal RNA large subunit methyltransferase K/L (711 aa).

The 112-residue stretch at 43-154 (LGYRITLWSR…RGEITIGINF (112 aa)) folds into the THUMP domain.

Belongs to the methyltransferase superfamily. RlmKL family.

It is found in the cytoplasm. The catalysed reaction is guanosine(2445) in 23S rRNA + S-adenosyl-L-methionine = N(2)-methylguanosine(2445) in 23S rRNA + S-adenosyl-L-homocysteine + H(+). It carries out the reaction guanosine(2069) in 23S rRNA + S-adenosyl-L-methionine = N(2)-methylguanosine(2069) in 23S rRNA + S-adenosyl-L-homocysteine + H(+). Functionally, specifically methylates the guanine in position 2445 (m2G2445) and the guanine in position 2069 (m7G2069) of 23S rRNA. The polypeptide is Ribosomal RNA large subunit methyltransferase K/L (Shewanella pealeana (strain ATCC 700345 / ANG-SQ1)).